Here is a 333-residue protein sequence, read N- to C-terminus: Acyl-CoA wax alcohol acyltransferase 2 (333 aa).

3 consecutive transmembrane segments (helical) span residues 15–35, 38–58, and 130–150; these read VFALFQWALSALVIVTTVIIV, YLVVFTSYWPVTVLMLTWLAF, and TFPGITPYMLTLGAFFWVPFL.

This sequence belongs to the diacylglycerol acyltransferase family. Monomer. As to expression, expressed in Mueller cells of the retina (at protein level). Abundant in tissues rich in sebaceous glands such as the preputial gland and eyelid.

The protein localises to the endoplasmic reticulum membrane. It catalyses the reaction a long chain fatty alcohol + a fatty acyl-CoA = a wax ester + CoA. The enzyme catalyses all-trans-retinol + an acyl-CoA = an all-trans-retinyl ester + CoA. The catalysed reaction is an acyl-CoA + a 1,2-diacyl-sn-glycerol = a triacyl-sn-glycerol + CoA. It carries out the reaction 9-cis-retinol + a fatty acyl-CoA = 9-cis-retinyl ester + CoA. It catalyses the reaction 11-cis-retinol + a fatty acyl-CoA = 11-cis-retinyl ester + CoA. The enzyme catalyses 13-cis-retinol + a fatty acyl-CoA = 13-cis-retinyl ester + CoA. The catalysed reaction is a 1-acylglycerol + an acyl-CoA = a 1,2-diacylglycerol + CoA. It carries out the reaction 1-O-alkylglycerol + an acyl-CoA = 1-O-alkyl-3-acylglycerol + CoA. It catalyses the reaction a 2-acylglycerol + an acyl-CoA = a 1,2-diacyl-sn-glycerol + CoA. The enzyme catalyses 2-(9Z-octadecenoyl)-glycerol + hexadecanoyl-CoA = 1-hexadecanoyl-2-(9Z-octadecenoyl)-sn-glycerol + CoA. The catalysed reaction is 1,2-di-(9Z-octadecenoyl)-sn-glycerol + hexadecanoyl-CoA = 1,2-di-(9Z)-octadecenoyl-3-hexadecanoyl-sn-glycerol + CoA. It carries out the reaction hexadecan-1-ol + hexadecanoyl-CoA = hexadecanyl hexadecanoate + CoA. It catalyses the reaction hexadecane-1,2-diol + hexadecanoyl-CoA = 2-hydroxyhexadecyl hexadecanoate + CoA. The enzyme catalyses all-trans-retinol + hexadecanoyl-CoA = all-trans-retinyl hexadecanoate + CoA. The catalysed reaction is 1,2-di-(9Z-octadecenoyl)-sn-glycerol + (9Z)-octadecenoyl-CoA = 1,2,3-tri-(9Z-octadecenoyl)-glycerol + CoA. It carries out the reaction hexadecan-1-ol + (9Z)-octadecenoyl-CoA = hexadecanyl (9Z)-octadecenoate + CoA. It catalyses the reaction (9Z)-hexadecen-1-ol + (9Z)-octadecenoyl-CoA = 1-O-(9Z)-hexadecenyl (9Z)-octadecenoate + CoA. The enzyme catalyses octadecan-1-ol + (9Z)-octadecenoyl-CoA = 1-O-octadecyl (9Z)-octadecenoate + CoA. The catalysed reaction is (9Z)-octadecen-1-ol + (9Z)-octadecenoyl-CoA = 1-O-(9Z)-octadecenyl (9Z)-octadecenoate + CoA. It carries out the reaction hexadecan-1-ol + (9Z)-hexadecenoyl-CoA = 1-O-hexadecyl (9Z)-hexadecenoate + CoA. It catalyses the reaction hexadecan-1-ol + octadecanoyl-CoA = hexadecanyl octadecanoate + CoA. The enzyme catalyses 11-cis-retinol + hexadecanoyl-CoA = 11-cis-retinyl hexadecanoate + CoA. The catalysed reaction is 1-O-(9Z-octadecenyl)-glycerol + (9Z)-octadecenoyl-CoA = 1-O-(9Z-octadecyl)-3-(9Z-octadecenoyl)-glycerol + CoA. It carries out the reaction 1-(9Z-octadecenoyl)-glycerol + (9Z)-octadecenoyl-CoA = 1,2-di-(9Z-octadecenoyl)-glycerol + CoA. It catalyses the reaction 11-cis-retinol + tetradecanoyl-CoA = 11-cis-retinyl tetradecanoate + CoA. The enzyme catalyses 9-cis-retinol + tetradecanoyl-CoA = 9-cis-retinyl tetradecanoate + CoA. The catalysed reaction is 9-cis-retinol + hexadecanoyl-CoA = 9-cis-retinyl hexadecanoate + CoA. It carries out the reaction 13-cis-retinol + tetradecanoyl-CoA = 13-cis-retinyl tetradecanoate + CoA. It catalyses the reaction all-trans-retinol + tetradecanoyl-CoA = all-trans-retinyl tetradecanoate + CoA. The enzyme catalyses tetradecan-1-ol + tetradecanoyl-CoA = tetradecanyl tetradecanoate + CoA. With respect to regulation, 11-cis retinoids act as allosteric modulators of acyl-CoA retinol O-fatty-acyltransferase (ARAT) activity by suppressing esterification of 9-cis, 13-cis, or all-trans retinols concurrently increasing the enzyme specificity toward 11-cis isomer. Its function is as follows. Acyltransferase that catalyzes the formation of ester bonds between fatty alcohols and fatty acyl-CoAs to form wax monoesters. Shows a preference for medium chain acyl-CoAs from C12 to C16 in length and fatty alcohols shorter than C20, as the acyl donor and acceptor, respectively. Also possesses fatty acyl-CoA retinol acyltransferase (ARAT) activity that preferentially esterifies 11-cis-retinol, a chromophore precursor of bleached opsin pigments in cone cells. Shows higher catalytic efficiency toward 11-cis-retinol versus 9-cis-retinol, 13- cis-retinol and all-trans-retinol substrates. This Mus musculus (Mouse) protein is Acyl-CoA wax alcohol acyltransferase 2 (Awat2).